The chain runs to 331 residues: L-lactate dehydrogenase A chain (331 aa).

NAD(+) contacts are provided by residues 29–57 (GMVG…MEDK) and Arg-98. Arg-105, Asn-137, and Arg-168 together coordinate substrate. An NAD(+)-binding site is contributed by Asn-137. Residue His-192 is the Proton acceptor of the active site. Thr-247 is a substrate binding site.

Belongs to the LDH/MDH superfamily. LDH family. Homotetramer.

It is found in the cytoplasm. It carries out the reaction (S)-lactate + NAD(+) = pyruvate + NADH + H(+). The protein operates within fermentation; pyruvate fermentation to lactate; (S)-lactate from pyruvate: step 1/1. Its function is as follows. Interconverts simultaneously and stereospecifically pyruvate and lactate with concomitant interconversion of NADH and NAD(+). The polypeptide is L-lactate dehydrogenase A chain (ldha) (Parachaenichthys charcoti (Charcot's dragonfish)).